The primary structure comprises 235 residues: MNKNVMIKGLTALTILTSLGFAENISDQPHSIAKAEKNIKEVTDATKAPYNSVVAFAGGTGVVVGKNTIVTNKHIAKSNDIFKNRVSAHHSSKGKGGGNYDVKDIVEYPGKEDLAIVHVHETSTEGLNFNKNVSYTKFAEGAKMKDRISVIGYPKGAQTKYKMFESTGTINHINGTFMEFDAYAQPGNSGSPVLNSKNELVGILYAGSGKDESEKNFGVYFTPQLKEFIQNNIEK.

Residues 1-35 (MNKNVMIKGLTALTILTSLGFAENISDQPHSIAKA) form the signal peptide. Catalysis depends on charge relay system residues histidine 74, aspartate 113, and serine 189.

This sequence belongs to the peptidase S1B family.

It localises to the secreted. The chain is Serine protease SplA (splA) from Staphylococcus aureus.